A 420-amino-acid polypeptide reads, in one-letter code: Glutamyl-tRNA reductase (420 aa).

Substrate is bound by residues 49–52, S109, 114–116, and Q120; these read TCNR and EPQ. C50 (nucleophile) is an active-site residue. 189 to 194 serves as a coordination point for NADP(+); sequence GAGETI.

This sequence belongs to the glutamyl-tRNA reductase family. Homodimer.

The catalysed reaction is (S)-4-amino-5-oxopentanoate + tRNA(Glu) + NADP(+) = L-glutamyl-tRNA(Glu) + NADPH + H(+). It functions in the pathway porphyrin-containing compound metabolism; protoporphyrin-IX biosynthesis; 5-aminolevulinate from L-glutamyl-tRNA(Glu): step 1/2. Functionally, catalyzes the NADPH-dependent reduction of glutamyl-tRNA(Glu) to glutamate 1-semialdehyde (GSA). This Serratia proteamaculans (strain 568) protein is Glutamyl-tRNA reductase.